The sequence spans 237 residues: CDP-diacylglycerol--serine O-phosphatidyltransferase (237 aa).

The next 8 helical transmembrane spans lie at 3–23, 25–45, 73–93, 95–115, 124–144, 150–170, 184–204, and 207–227; these read INPL…LGMM, IFYA…ASLI, VIAF…YNFG, IGMA…ARFN, YSFI…CVLL, FLEG…GVLM, WNLK…VRPL, and LSVF…FLMV.

This sequence belongs to the CDP-alcohol phosphatidyltransferase class-I family.

Its subcellular location is the cell membrane. The catalysed reaction is a CDP-1,2-diacyl-sn-glycerol + L-serine = a 1,2-diacyl-sn-glycero-3-phospho-L-serine + CMP + H(+). The protein is CDP-diacylglycerol--serine O-phosphatidyltransferase (pssA) of Helicobacter pylori (strain ATCC 700392 / 26695) (Campylobacter pylori).